The primary structure comprises 234 residues: Probable transcriptional regulatory protein Pfl01_3677 (234 aa).

It belongs to the TACO1 family.

It is found in the cytoplasm. In Pseudomonas fluorescens (strain Pf0-1), this protein is Probable transcriptional regulatory protein Pfl01_3677.